The sequence spans 175 residues: FOXL2 neighbor protein (175 aa).

Disordered stretches follow at residues 1-39 (MTRT…PALV) and 70-100 (AQKT…GKRR).

This is FOXL2 neighbor protein (FOXL2NB) from Homo sapiens (Human).